Reading from the N-terminus, the 198-residue chain is Transcription factor elt-7 (198 aa).

Residues 1-18 (MLPETTTLQPLPSVTTIM) are compositionally biased toward polar residues. The interval 1–20 (MLPETTTLQPLPSVTTIMNE) is disordered. A GATA-type zinc finger spans residues 143–167 (CSHCSTTTTTLWRKNDEGNLECNAC).

The protein localises to the nucleus. In terms of biological role, transcriptional activator that binds to the consensus sequence 5'-[AT]GATA[AG]-3'. Required for gut-specific differentiation, specifically acting with the GATA region-binding transcription factor elt-2 to control normal gene expression and promote normal formation of the intestine. May have a protective role in response to infection by Gram-negative bacteria such as P.aeruginosa. This Caenorhabditis elegans protein is Transcription factor elt-7.